Here is a 282-residue protein sequence, read N- to C-terminus: Shikimate dehydrogenase (NADP(+)) (282 aa).

Residues 16 to 18 and Thr-63 each bind shikimate; that span reads SLS. Catalysis depends on Lys-67, which acts as the Proton acceptor. Shikimate-binding residues include Asn-88 and Asp-103. Residues 128 to 132 and Leu-219 contribute to the NADP(+) site; that span reads GAGGA. Tyr-221 contributes to the shikimate binding site. An NADP(+)-binding site is contributed by Gly-243.

Belongs to the shikimate dehydrogenase family. Homodimer.

The enzyme catalyses shikimate + NADP(+) = 3-dehydroshikimate + NADPH + H(+). Its pathway is metabolic intermediate biosynthesis; chorismate biosynthesis; chorismate from D-erythrose 4-phosphate and phosphoenolpyruvate: step 4/7. Involved in the biosynthesis of the chorismate, which leads to the biosynthesis of aromatic amino acids. Catalyzes the reversible NADPH linked reduction of 3-dehydroshikimate (DHSA) to yield shikimate (SA). This is Shikimate dehydrogenase (NADP(+)) from Xylella fastidiosa (strain M12).